We begin with the raw amino-acid sequence, 69 residues long: DNA gyrase inhibitor YacG (69 aa).

Positions 12, 15, 31, and 35 each coordinate Zn(2+). Residues 49-69 (RVPVEPKPDEGETPDQAERPQ) are disordered.

This sequence belongs to the DNA gyrase inhibitor YacG family. In terms of assembly, interacts with GyrB. It depends on Zn(2+) as a cofactor.

Inhibits all the catalytic activities of DNA gyrase by preventing its interaction with DNA. Acts by binding directly to the C-terminal domain of GyrB, which probably disrupts DNA binding by the gyrase. This chain is DNA gyrase inhibitor YacG, found in Thiobacillus denitrificans (strain ATCC 25259 / T1).